Consider the following 361-residue polypeptide: Glutamine synthetase (361 aa).

Positions 23 to 103 (CQAMYIWVDG…VLCETYKYNK (81 aa)) constitute a GS beta-grasp domain. In terms of domain architecture, GS catalytic spans 110-361 (QRWKCMEVMT…LVRTICLNEQ (252 aa)). ATP is bound at residue Glu131. Residues Glu131, Glu133, and Glu200 each contribute to the Mn(2+) site. 200–205 (EFQVGP) contacts ATP. 243-244 (DW) is a binding site for L-glutamate. His250 provides a ligand contact to Mn(2+). Residues 252 to 254 (NFS), Arg316, and Arg321 each bind ATP. Arg316 lines the L-glutamate pocket. 333–335 (YLE) lines the ADP pocket. A Mn(2+)-binding site is contributed by Glu335. Arg337 serves as a coordination point for L-glutamate.

Belongs to the glutamine synthetase family. Requires Mg(2+) as cofactor. The cofactor is Mn(2+).

The protein resides in the cytoplasm. It localises to the cytosol. Its subcellular location is the microsome. It is found in the mitochondrion. It carries out the reaction L-glutamate + NH4(+) + ATP = L-glutamine + ADP + phosphate + H(+). Glutamine synthetase that catalyzes the ATP-dependent conversion of glutamate and ammonia to glutamine. The protein is Glutamine synthetase of Panulirus argus (Caribbean spiny lobster).